Consider the following 304-residue polypeptide: MAIISEVEEESSSSRPMIFPFRATLSSANPLGFLEKVFDFLGEQSDFLKKPSAEDEIVVAVRAAKEKLKKAEKKKAEKESVKPVEKKAEKEIVKLVEKKVEKESVKPTIAASSAEPIEVEKPKEEEEKKESGPIVPNKGNGTDLENYSWIQNLQEVTVNIPVPTGTKARTVVCEIKKNRLKVGLKGQDPIVDGELYRSVKPDDCYWNIEDQKVISILLTKSDQMEWWKCCVKGEPEIDTQKVEPETSKLGDLDPETRSTVEKMMFDQRQKQMGLPTSEELQKQEILKKFMSEHPEMDFSNAKFN.

Ala-2 carries the N-acetylalanine modification. Residues 54-106 are a coiled coil; it reads EDEIVVAVRAAKEKLKKAEKKKAEKESVKPVEKKAEKEIVKLVEKKVEKESVK. The disordered stretch occupies residues 111–141; it reads ASSAEPIEVEKPKEEEEKKESGPIVPNKGNG. Positions 118-131 are enriched in basic and acidic residues; the sequence is EVEKPKEEEEKKES. The region spanning 142-231 is the CS domain; the sequence is TDLENYSWIQ…DQMEWWKCCV (90 aa).

In terms of tissue distribution, expressed in all seedling tissues with highest expression levels at the root tip.

The protein localises to the cytoplasm. It localises to the cytoplasmic granule. Functionally, small heat shock protein required for the establishment of auxin gradients and for patterning of the apical domain of the embryo. Involved in the specification of the cotyledon primordia. Also required for normal inflorescence and floral meristem function, normal developmental patterning and thermotolerance. Acts as a molecular chaperone. The sequence is that of Protein BOBBER 1 (BOB1) from Arabidopsis thaliana (Mouse-ear cress).